The following is a 451-amino-acid chain: Serine--tRNA ligase (451 aa).

258–260 contributes to the L-serine binding site; it reads TSE. 289–291 serves as a coordination point for ATP; that stretch reads RSE. Position 312 (Glu312) interacts with L-serine. An ATP-binding site is contributed by 376–379; it reads EISS. Ser411 serves as a coordination point for L-serine.

It belongs to the class-II aminoacyl-tRNA synthetase family. Type-1 seryl-tRNA synthetase subfamily. As to quaternary structure, homodimer. The tRNA molecule binds across the dimer.

The protein localises to the cytoplasm. It carries out the reaction tRNA(Ser) + L-serine + ATP = L-seryl-tRNA(Ser) + AMP + diphosphate + H(+). It catalyses the reaction tRNA(Sec) + L-serine + ATP = L-seryl-tRNA(Sec) + AMP + diphosphate + H(+). It participates in aminoacyl-tRNA biosynthesis; selenocysteinyl-tRNA(Sec) biosynthesis; L-seryl-tRNA(Sec) from L-serine and tRNA(Sec): step 1/1. In terms of biological role, catalyzes the attachment of serine to tRNA(Ser). Is also able to aminoacylate tRNA(Sec) with serine, to form the misacylated tRNA L-seryl-tRNA(Sec), which will be further converted into selenocysteinyl-tRNA(Sec). In Bordetella pertussis (strain Tohama I / ATCC BAA-589 / NCTC 13251), this protein is Serine--tRNA ligase.